We begin with the raw amino-acid sequence, 353 residues long: UDP-N-acetylglucosamine--N-acetylmuramyl-(pentapeptide) pyrophosphoryl-undecaprenol N-acetylglucosamine transferase (353 aa).

Residues 15-17 (TGG), Asn-125, Arg-165, Ser-186, and Gln-286 contribute to the UDP-N-acetyl-alpha-D-glucosamine site.

Belongs to the glycosyltransferase 28 family. MurG subfamily.

Its subcellular location is the cell inner membrane. The catalysed reaction is di-trans,octa-cis-undecaprenyl diphospho-N-acetyl-alpha-D-muramoyl-L-alanyl-D-glutamyl-meso-2,6-diaminopimeloyl-D-alanyl-D-alanine + UDP-N-acetyl-alpha-D-glucosamine = di-trans,octa-cis-undecaprenyl diphospho-[N-acetyl-alpha-D-glucosaminyl-(1-&gt;4)]-N-acetyl-alpha-D-muramoyl-L-alanyl-D-glutamyl-meso-2,6-diaminopimeloyl-D-alanyl-D-alanine + UDP + H(+). The protein operates within cell wall biogenesis; peptidoglycan biosynthesis. Functionally, cell wall formation. Catalyzes the transfer of a GlcNAc subunit on undecaprenyl-pyrophosphoryl-MurNAc-pentapeptide (lipid intermediate I) to form undecaprenyl-pyrophosphoryl-MurNAc-(pentapeptide)GlcNAc (lipid intermediate II). The sequence is that of UDP-N-acetylglucosamine--N-acetylmuramyl-(pentapeptide) pyrophosphoryl-undecaprenol N-acetylglucosamine transferase from Chlamydia muridarum (strain MoPn / Nigg).